Here is a 139-residue protein sequence, read N- to C-terminus: Ribulose bisphosphate carboxylase small subunit (139 aa).

The protein belongs to the RuBisCO small chain family. As to quaternary structure, heterohexadecamer of 8 large and 8 small subunits.

Its subcellular location is the plastid. It is found in the chloroplast. In terms of biological role, ruBisCO catalyzes two reactions: the carboxylation of D-ribulose 1,5-bisphosphate, the primary event in carbon dioxide fixation, as well as the oxidative fragmentation of the pentose substrate in the photorespiration process. Both reactions occur simultaneously and in competition at the same active site. Although the small subunit is not catalytic it is essential for maximal activity. The chain is Ribulose bisphosphate carboxylase small subunit from Guillardia theta (Cryptophyte).